Consider the following 628-residue polypeptide: tRNA 5-methylaminomethyl-2-thiouridine biosynthesis bifunctional protein MnmC (628 aa).

Residues 1 to 237 (MSSYSPLVPP…KWHMTVGVRE (237 aa)) are tRNA (mnm(5)s(2)U34)-methyltransferase. The tract at residues 265–628 (VGGGLAGAGI…ADLLAAVAPR (364 aa)) is FAD-dependent cmnm(5)s(2)U34 oxidoreductase.

In the N-terminal section; belongs to the methyltransferase superfamily. tRNA (mnm(5)s(2)U34)-methyltransferase family. The protein in the C-terminal section; belongs to the DAO family. Requires FAD as cofactor.

It localises to the cytoplasm. The catalysed reaction is 5-aminomethyl-2-thiouridine(34) in tRNA + S-adenosyl-L-methionine = 5-methylaminomethyl-2-thiouridine(34) in tRNA + S-adenosyl-L-homocysteine + H(+). In terms of biological role, catalyzes the last two steps in the biosynthesis of 5-methylaminomethyl-2-thiouridine (mnm(5)s(2)U) at the wobble position (U34) in tRNA. Catalyzes the FAD-dependent demodification of cmnm(5)s(2)U34 to nm(5)s(2)U34, followed by the transfer of a methyl group from S-adenosyl-L-methionine to nm(5)s(2)U34, to form mnm(5)s(2)U34. The chain is tRNA 5-methylaminomethyl-2-thiouridine biosynthesis bifunctional protein MnmC from Bordetella petrii (strain ATCC BAA-461 / DSM 12804 / CCUG 43448).